Here is a 597-residue protein sequence, read N- to C-terminus: Alpha-1,2-mannosyltransferase MNN2 (597 aa).

Residues 1–12 lie on the Cytoplasmic side of the membrane; that stretch reads MLLTKRFSKLFK. Residues 13–28 form a helical; Signal-anchor for type II membrane protein membrane-spanning segment; sequence LTFIVLILCGLFVITN. Residues 29–597 are Extracellular-facing; the sequence is KYMDENTSVK…STHDKAIAGK (569 aa). Asn-34, Asn-363, and Asn-473 each carry an N-linked (GlcNAc...) asparagine glycan.

The protein belongs to the MNN1/MNT family. In terms of assembly, interacts with SVP26.

It localises to the golgi apparatus membrane. Its pathway is protein modification; protein glycosylation. Functionally, alpha-1,2-mannosyltransferase, responsible for addition of the first alpha-1,2-linked mannose to form the branches on the mannan backbone of oligosaccharides. This Saccharomyces cerevisiae (strain ATCC 204508 / S288c) (Baker's yeast) protein is Alpha-1,2-mannosyltransferase MNN2 (MNN2).